The following is a 164-amino-acid chain: Succinate dehydrogenase assembly factor 2, mitochondrial (164 aa).

Residues 1–27 constitute a mitochondrion transit peptide; that stretch reads MAVVTLIPTLARVLSKHSLLSPLLSVT.

It belongs to the SDHAF2 family. As to quaternary structure, interacts with SDHA within the SDH catalytic dimer.

Its subcellular location is the mitochondrion matrix. In terms of biological role, plays an essential role in the assembly of succinate dehydrogenase (SDH), an enzyme complex (also referred to as respiratory complex II) that is a component of both the tricarboxylic acid (TCA) cycle and the mitochondrial electron transport chain, and which couples the oxidation of succinate to fumarate with the reduction of ubiquinone (coenzyme Q) to ubiquinol. Required for flavinylation (covalent attachment of FAD) of the flavoprotein subunit SDHA of the SDH catalytic dimer. The sequence is that of Succinate dehydrogenase assembly factor 2, mitochondrial from Rattus norvegicus (Rat).